We begin with the raw amino-acid sequence, 264 residues long: Small ribosomal subunit protein eS1 (264 aa).

Basic and acidic residues predominate over residues 236-255 (GEGGSGKRGEAGDKSERPEG). A disordered region spans residues 236 to 264 (GEGGSGKRGEAGDKSERPEGYEPPVQESV).

This sequence belongs to the eukaryotic ribosomal protein eS1 family. In terms of assembly, component of the small ribosomal subunit. Mature ribosomes consist of a small (40S) and a large (60S) subunit. The 40S subunit contains about 33 different proteins and 1 molecule of RNA (18S). The 60S subunit contains about 49 different proteins and 3 molecules of RNA (28S, 5.8S and 5S).

The protein resides in the cytoplasm. This is Small ribosomal subunit protein eS1 from Spodoptera frugiperda (Fall armyworm).